Consider the following 257-residue polypeptide: Probable septum site-determining protein MinC (257 aa).

It belongs to the MinC family. In terms of assembly, interacts with MinD and FtsZ.

Functionally, cell division inhibitor that blocks the formation of polar Z ring septums. Rapidly oscillates between the poles of the cell to destabilize FtsZ filaments that have formed before they mature into polar Z rings. Prevents FtsZ polymerization. The chain is Probable septum site-determining protein MinC from Burkholderia lata (strain ATCC 17760 / DSM 23089 / LMG 22485 / NCIMB 9086 / R18194 / 383).